We begin with the raw amino-acid sequence, 407 residues long: Inactive non-canonical poly(A) RNA polymerase protein Trf4-2 (407 aa).

Asp-85 and Asp-87 together coordinate Mg(2+). The region spanning 221 to 280 is the PAP-associated domain; that stretch reads LALLLIQFLDYYGRKFDFFKYGISVLGQGGCVEKARLRSTLGENNWQSVLCIEDPVTPTN. A disordered region spans residues 354–390; the sequence is LVQPSPTGSTSPSASASASEDERSGGPATIGFGRCDD. The segment covering 357-371 has biased composition (low complexity); sequence PSPTGSTSPSASASA.

Belongs to the DNA polymerase type-B-like family.

This chain is Inactive non-canonical poly(A) RNA polymerase protein Trf4-2, found in Drosophila melanogaster (Fruit fly).